The primary structure comprises 96 residues: Myosuppressin (96 aa).

The signal sequence occupies residues 1 to 24 (MALGNGYYCAVVCVVLACASVVLC). Residues 25–80 (APAQLCAGAADDDPRAARFCQALNTFLELYAEAAGEQVPEYQALVRDYPQLLDTGM) constitute a propeptide that is removed on maturation. At Gln83 the chain carries Pyrrolidone carboxylic acid; partial. Residue Phe92 is modified to Phenylalanine amide. A propeptide is located at residue Arg96.

This sequence belongs to the myosuppressin family. In terms of tissue distribution, expressed in corpora cardiaca (CC), corpora allata (CA), antennal lobe (AL) and gnathal ganglion (GNG) (at protein level). In its non-pyroglutamate form, expression in GNG detected in all animals, in AL, CC and in CA in most animals (at protein level). In its pyroglutamate form, expression in CC, CA and GNG detected in all animals, in AL in some animals (at protein level).

It is found in the secreted. Myoinhibiting neuropeptide. This is Myosuppressin from Agrotis ipsilon (Black cutworm moth).